Here is a 426-residue protein sequence, read N- to C-terminus: Pannexin-1 (426 aa).

Residues 1–40 (MAIAQLATEYVFSDFLLKEPTEPKFKGLRLELAVDKMVTC) lie on the Cytoplasmic side of the membrane. The residue at position 40 (C40) is an S-nitrosocysteine. The helical transmembrane segment at 41–61 (IAVGLPLLLISLAFAQEISIG) threads the bilayer. The Extracellular segment spans residues 62–106 (TQISCFSPSSFSWRQAAFVDSYCWAAVQQKNSLQSESGNLPLWLH). 2 disulfide bridges follow: C66–C265 and C84–C246. Residues 107 to 127 (KFFPYILLLFAILLYLPPLFW) form a helical membrane-spanning segment. The Cytoplasmic segment spans residues 128-217 (RFAAAPHICS…NLIIKYISCR (90 aa)). Residue Y199 is modified to Phosphotyrosine. Residues 218–238 (LLTLIIILLACIYLGYYFSLS) traverse the membrane as a helical segment. Over 239 to 266 (SLSDEFVCSIKSGILRNDSTVPDQFQCK) the chain is Extracellular. N255 carries N-linked (GlcNAc...) asparagine glycosylation. Residues 267-287 (LIAVGIFQLLSVINLVVYVLL) form a helical membrane-spanning segment. At 288–426 (APVVVYTLFV…ARQRLLDSSC (139 aa)) the chain is on the cytoplasmic side. S-nitrosocysteine is present on C347. The segment covering 405–414 (DSETKANNGE) has biased composition (polar residues). The segment at 405–426 (DSETKANNGEKNARQRLLDSSC) is disordered. Residues 415–426 (KNARQRLLDSSC) are compositionally biased toward basic and acidic residues.

This sequence belongs to the pannexin family. In terms of assembly, homoheptameric. In terms of processing, S-nitrosylation inhibits channel currents and ATP release. N-glycosylation plays a role in cell surface targeting. Glycosylation at its extracellular surface makes unlikely that two oligomers could dock to form an intercellular channel such as in gap junctions. Exists in three glycosylation states: non-glycosylated (GLY0), high-mannose glycosylated (GLY1), and fully mature glycosylated (GLY2). Post-translationally, cleaved by CASP3 and CASP7 during apoptosis. Cleavage opens the channel for the release of metabolites and induces plasma membrane permeability during apoptosis. In terms of processing, phosphorylated at Tyr-199 by SRC. Phosphorylation activates ATP release. Constitutively phosphorylated in vascular smooth muscle cells. Widely expressed. Highest expression is observed in oocytes and brain. Detected at very low levels in sperm cells.

It localises to the cell membrane. The protein localises to the endoplasmic reticulum membrane. The enzyme catalyses chloride(in) = chloride(out). It catalyses the reaction iodide(out) = iodide(in). It carries out the reaction ATP(in) = ATP(out). The catalysed reaction is K(+)(in) = K(+)(out). The enzyme catalyses Ca(2+)(in) = Ca(2+)(out). It catalyses the reaction Na(+)(in) = Na(+)(out). It carries out the reaction nitrate(in) = nitrate(out). The catalysed reaction is L-aspartate(out) = L-aspartate(in). The enzyme catalyses L-glutamate(out) = L-glutamate(in). It catalyses the reaction D-gluconate(in) = D-gluconate(out). It carries out the reaction spermidine(in) = spermidine(out). In terms of biological role, ion channel involved in a variety of physiological functions such as blood pressure regulation, apoptotic cell clearance and oogenesis. Forms anion-selective channels with relatively low conductance and an order of permeabilities: nitrate&gt;iodide&gt;chlroride&gt;&gt;aspartate=glutamate=gluconate. Can release ATP upon activation through phosphorylation or cleavage at C-terminus. May play a role as a Ca(2+)-leak channel to regulate ER Ca(2+) homeostasis. Its function is as follows. During apoptosis, the C terminal tail is cleaved by caspases, which opens the main pore acting as a large-pore ATP efflux channel with a broad distribution, which allows the regulated release of molecules and ions smaller than 1 kDa, such as nucleotides ATP and UTP, and selective plasma membrane permeability to attract phagocytes that engulf the dying cells. The protein is Pannexin-1 of Homo sapiens (Human).